The following is a 245-amino-acid chain: Phycocyanobilin:ferredoxin oxidoreductase (245 aa).

The protein belongs to the HY2 family.

It catalyses the reaction (2R,3Z)-phycocyanobilin + 4 oxidized [2Fe-2S]-[ferredoxin] = biliverdin IXalpha + 4 reduced [2Fe-2S]-[ferredoxin] + 4 H(+). Its function is as follows. Catalyzes the four-electron reduction of biliverdin IX-alpha (2-electron reduction at both the A and D rings); the reaction proceeds via an isolatable 2-electron intermediate, 181,182-dihydrobiliverdin. Upon overexpression in E.coli with PCB:ferredoxin oxidoreductase, CpeS and either CpcB or PecB permits synthesis of phycocyanin-coupled CpcB or PecB. The sequence is that of Phycocyanobilin:ferredoxin oxidoreductase (pcyA) from Nostoc sp. (strain PCC 7120 / SAG 25.82 / UTEX 2576).